A 299-amino-acid chain; its full sequence is Acetyl-hydrolase (299 aa).

An Involved in the stabilization of the negatively charged intermediate by the formation of the oxyanion hole motif is present at residues 73–75 (HGG). Active-site residues include Ser143, Glu237, and His267.

This sequence belongs to the 'GDXG' lipolytic enzyme family.

Its pathway is secondary metabolite biosynthesis; bialaphos biosynthesis. In terms of biological role, this protein removes the N-acetyl group from bialaphos as one of the final steps of biosynthesis of phosphinothricin tripeptide (PTT), also known as bialaphos (BA), a natural-product antibiotic and potent herbicide. This chain is Acetyl-hydrolase (bah), found in Streptomyces hygroscopicus.